The sequence spans 215 residues: Redox-sensing transcriptional repressor Rex (215 aa).

The H-T-H motif DNA-binding region spans Leu-18 to Phe-57. Gly-92–Gly-97 is an NAD(+) binding site.

This sequence belongs to the transcriptional regulatory Rex family. In terms of assembly, homodimer.

Its subcellular location is the cytoplasm. Functionally, modulates transcription in response to changes in cellular NADH/NAD(+) redox state. This Bacillus velezensis (strain DSM 23117 / BGSC 10A6 / LMG 26770 / FZB42) (Bacillus amyloliquefaciens subsp. plantarum) protein is Redox-sensing transcriptional repressor Rex.